We begin with the raw amino-acid sequence, 452 residues long: Glycoprotein endo-alpha-1,2-mannosidase-like protein (452 aa).

The Cytoplasmic segment spans residues 1–8 (MARRRRRA). Residues 9–29 (CIALFLVLLFAFGTLMGLRTL) traverse the membrane as a helical; Signal-anchor for type II membrane protein segment. Residues 30-452 (KAPDGLPALG…FIKEKEQWLM (423 aa)) lie on the Lumenal side of the membrane. Residues 40-90 (PGPELAPFERRPEGNPAPARAPAAPAAPPPPPPRTAAPRASLGPAEADPAP) form a disordered region. A compositionally biased stretch (pro residues) spans 64–74 (PAAPPPPPPRT).

This sequence belongs to the glycosyl hydrolase 99 family.

It localises to the golgi apparatus membrane. The protein is Glycoprotein endo-alpha-1,2-mannosidase-like protein (Maneal) of Mus musculus (Mouse).